Reading from the N-terminus, the 508-residue chain is MTEPTQTQPAVAADENQIIAERRDKLRALREQGVAYPNDFRPTHRAAELQAKFAESDKEALEANPFEVAVAGRMMLKRVMGKASFATVQDGSGQIQFFVTPNDVGAETYDAFKKWDLGDIVAARGVLFRTNKGELSVKCTELRLLSKALRPLPDKFHGLSDQEMRYRQRYVDLIVTPETRDTFRARTKTIASIRKFMSDAEFMEVETPMLHPIPGGAAAKPFVTHHNALDMQMFLRIAPELYLKRLIVGGFERVFEINRNFRNEGVSPRHNPEFTMMEFYAAYTDYRWLMDFTEQLIRQAAIDALGTATIQYQGRELDLAKPFHRLTITQAIQKYAPQYTDGQLSDNAYLRSELKRLGVDVTQPAFLNAGIGALQLALFEETAESQLWEPTFIIDYPVEVSPLARASDTVPGITERFELFITGREIANGFSELNDPEDQAARFKKQVEQKDAGDEEAMYFDADYIRALEYGMPPTGGCGIGIDRLVMLLTDSPTIRDVLLFPHLRRED.

Mg(2+) is bound by residues E418 and E425.

It belongs to the class-II aminoacyl-tRNA synthetase family. In terms of assembly, homodimer. Mg(2+) serves as cofactor.

The protein resides in the cytoplasm. It carries out the reaction tRNA(Lys) + L-lysine + ATP = L-lysyl-tRNA(Lys) + AMP + diphosphate. The sequence is that of Lysine--tRNA ligase from Burkholderia multivorans (strain ATCC 17616 / 249).